A 247-amino-acid chain; its full sequence is Carboxy-S-adenosyl-L-methionine synthase (247 aa).

Residues Tyr-40, 65–67 (GAS), 90–91 (DN), 122–123 (DI), Asn-137, and Arg-204 contribute to the S-adenosyl-L-methionine site.

It belongs to the class I-like SAM-binding methyltransferase superfamily. Cx-SAM synthase family. In terms of assembly, homodimer.

The enzyme catalyses prephenate + S-adenosyl-L-methionine = carboxy-S-adenosyl-L-methionine + 3-phenylpyruvate + H2O. Functionally, catalyzes the conversion of S-adenosyl-L-methionine (SAM) to carboxy-S-adenosyl-L-methionine (Cx-SAM). This Pseudomonas fluorescens (strain Pf0-1) protein is Carboxy-S-adenosyl-L-methionine synthase.